Here is a 237-residue protein sequence, read N- to C-terminus: Leucyl/phenylalanyl-tRNA--protein transferase (237 aa).

It belongs to the L/F-transferase family.

Its subcellular location is the cytoplasm. It carries out the reaction N-terminal L-lysyl-[protein] + L-leucyl-tRNA(Leu) = N-terminal L-leucyl-L-lysyl-[protein] + tRNA(Leu) + H(+). The catalysed reaction is N-terminal L-arginyl-[protein] + L-leucyl-tRNA(Leu) = N-terminal L-leucyl-L-arginyl-[protein] + tRNA(Leu) + H(+). It catalyses the reaction L-phenylalanyl-tRNA(Phe) + an N-terminal L-alpha-aminoacyl-[protein] = an N-terminal L-phenylalanyl-L-alpha-aminoacyl-[protein] + tRNA(Phe). In terms of biological role, functions in the N-end rule pathway of protein degradation where it conjugates Leu, Phe and, less efficiently, Met from aminoacyl-tRNAs to the N-termini of proteins containing an N-terminal arginine or lysine. The chain is Leucyl/phenylalanyl-tRNA--protein transferase from Photobacterium profundum (strain SS9).